The primary structure comprises 127 residues: Spore germination protein 2 (127 aa).

The signal sequence occupies residues 1–25; sequence MNIRNSLILIISTILFFSIINGSLS. N-linked (GlcNAc...) asparagine glycosylation is found at N54 and N118.

This sequence belongs to the Dictyostelium gerABC family.

It is found in the secreted. The polypeptide is Spore germination protein 2 (gerB) (Dictyostelium discoideum (Social amoeba)).